The following is a 274-amino-acid chain: Pyrogallol hydroxytransferase small subunit (274 aa).

Residues Cys-13, Cys-16, Cys-19, Cys-23, Cys-68, Cys-71, Cys-76, Cys-109, Cys-126, Cys-129, Cys-145, and Cys-149 each contribute to the [4Fe-4S] cluster site.

Heterodimer of a large and a small subunit. It depends on [4Fe-4S] cluster as a cofactor.

The catalysed reaction is 1,2,3,5-tetrahydroxybenzene + 1,2,3-trihydroxybenzene = 1,2,3,5-tetrahydroxybenzene + 1,3,5-trihydroxybenzene. Its function is as follows. Isomerization of pyrogallol to phloroglucin. The chain is Pyrogallol hydroxytransferase small subunit (bthL) from Pelobacter acidigallici.